Consider the following 286-residue polypeptide: MYEKLIGAHVSASGGVELAPVRAHEIGANAFALFTKNQRQWAAKPLEASSIRAFKANCKKWGFGSEAILPHDSYLINLGAPEPEKLDKSRAAFVDEMLRCDQLGLTLLNFHPGSHLQQVSEEACLATIAESINLAHRQVPNVIAVIENTAGQGSNLGWRFEHLAAIIDQVEDKERVGVCLDTCHTFAAGYDLRTKAACDETFAEFERVVGMHYLRAMHINDSKGKLASRVDRHHSLGMGEIGWECFEYIAQDARFNGIPLILETIDPDIWATEIATLRKFSTQKEN.

9 residues coordinate Zn(2+): His71, His111, Glu147, Asp181, His184, His218, Asp231, His233, and Glu263.

Belongs to the AP endonuclease 2 family. It depends on Zn(2+) as a cofactor.

The catalysed reaction is Endonucleolytic cleavage to 5'-phosphooligonucleotide end-products.. Endonuclease IV plays a role in DNA repair. It cleaves phosphodiester bonds at apurinic or apyrimidinic (AP) sites, generating a 3'-hydroxyl group and a 5'-terminal sugar phosphate. This is Probable endonuclease 4 from Vibrio cholerae serotype O1 (strain ATCC 39541 / Classical Ogawa 395 / O395).